The following is a 952-amino-acid chain: Glutamate receptor 2.7 (952 aa).

The first 32 residues, 1-32, serve as a signal peptide directing secretion; it reads MKVMNPRKTNNTFMYYFVLFVCGFVLMEGCLG. The Extracellular portion of the chain corresponds to 33–582; the sequence is QNQTTEIKVG…NTWVFLRPWS (550 aa). Residues Asn-34, Asn-60, Asn-355, Asn-428, and Asn-546 are each glycosylated (N-linked (GlcNAc...) asparagine). The helical transmembrane segment at 583–603 threads the bilayer; that stretch reads LDLWVTTACFFVFIGFIVWIL. Residues 604 to 612 are Cytoplasmic-facing; that stretch reads EHRVNTDFR. A helical transmembrane segment spans residues 613-633; that stretch reads GPPHHQIGTSFWFAFSTMNFA. The Cytoplasmic portion of the chain corresponds to 634 to 637; sequence HREK. Residues 638-658 traverse the membrane as a helical segment; it reads VVSNLARFVVLVWCFVVLVLI. Over 659-821 the chain is Extracellular; it reads QSYTANLTSF…LSSNHLSLSS (163 aa). 5 N-linked (GlcNAc...) asparagine glycosylation sites follow: Asn-664, Asn-728, Asn-748, Asn-784, and Asn-809. The chain crosses the membrane as a helical span at residues 822–842; it reads FWGLFLIAGIASFLALLIFVA. The Cytoplasmic segment spans residues 843–952; sequence NFLYEHKHTL…ESAIIQCEGE (110 aa). The segment covering 889–908 has biased composition (polar residues); sequence VSSPITQGSSSPLTDQSTPL. 2 disordered regions span residues 889–914 and 932–952; these read VSSP…SPEQ and FTTQ…CEGE.

This sequence belongs to the glutamate-gated ion channel (TC 1.A.10.1) family. In terms of assembly, may form heteromers. Expressed predominantly in leaves.

Its subcellular location is the membrane. Functionally, glutamate-gated receptor that probably acts as a non-selective cation channel. May be involved in light-signal transduction and calcium homeostasis via the regulation of calcium influx into cells. In Arabidopsis thaliana (Mouse-ear cress), this protein is Glutamate receptor 2.7 (GLR2.7).